The primary structure comprises 29 residues: Cyclotide mra2 (29 aa).

3 disulfide bridges follow: Cys4/Cys19, Cys8/Cys21, and Cys13/Cys26.

Post-translationally, this is a cyclic peptide. In terms of processing, contains 3 disulfide bonds.

Its function is as follows. Probably participates in a plant defense mechanism. The sequence is that of Cyclotide mra2 from Melicytus ramiflorus (Whitey wood).